The primary structure comprises 64 residues: Large ribosomal subunit protein bL35 (64 aa).

A disordered region spans residues 18–39 (GSGLVKHYPSNKHHKNTHKKEN). The span at 26-39 (PSNKHHKNTHKKEN) shows a compositional bias: basic residues.

Belongs to the bacterial ribosomal protein bL35 family.

This chain is Large ribosomal subunit protein bL35, found in Symbiobacterium thermophilum (strain DSM 24528 / JCM 14929 / IAM 14863 / T).